A 120-amino-acid polypeptide reads, in one-letter code: Large ribosomal subunit protein uL18c (120 aa).

Belongs to the universal ribosomal protein uL18 family. In terms of assembly, part of the 50S ribosomal subunit; contacts the 5S rRNA.

It localises to the plastid. It is found in the chloroplast. Binds 5S rRNA, forms part of the central protuberance of the 50S subunit. This Porphyra purpurea (Red seaweed) protein is Large ribosomal subunit protein uL18c (rpl18).